A 372-amino-acid chain; its full sequence is Alanine racemase (372 aa).

Lys36 acts as the Proton acceptor; specific for D-alanine in catalysis. Lys36 carries the post-translational modification N6-(pyridoxal phosphate)lysine. Position 134 (Arg134) interacts with substrate. Tyr266 acts as the Proton acceptor; specific for L-alanine in catalysis. Met314 is a binding site for substrate.

This sequence belongs to the alanine racemase family. Pyridoxal 5'-phosphate is required as a cofactor.

It carries out the reaction L-alanine = D-alanine. The protein operates within amino-acid biosynthesis; D-alanine biosynthesis; D-alanine from L-alanine: step 1/1. Catalyzes the interconversion of L-alanine and D-alanine. May also act on other amino acids. This chain is Alanine racemase (alr), found in Nitratidesulfovibrio vulgaris (strain DSM 19637 / Miyazaki F) (Desulfovibrio vulgaris).